The primary structure comprises 311 residues: Formimidoylglutamase (311 aa).

Residues histidine 130, aspartate 155, histidine 157, aspartate 159, cysteine 242, and aspartate 244 each contribute to the Mn(2+) site.

This sequence belongs to the arginase family. The cofactor is Mn(2+).

It catalyses the reaction N-formimidoyl-L-glutamate + H2O = formamide + L-glutamate. The protein operates within amino-acid degradation; L-histidine degradation into L-glutamate; L-glutamate from N-formimidoyl-L-glutamate (hydrolase route): step 1/1. In terms of biological role, catalyzes the conversion of N-formimidoyl-L-glutamate to L-glutamate and formamide. This chain is Formimidoylglutamase, found in Staphylococcus haemolyticus (strain JCSC1435).